Reading from the N-terminus, the 103-residue chain is Large ribosomal subunit protein uL24 (103 aa).

Belongs to the universal ribosomal protein uL24 family. In terms of assembly, part of the 50S ribosomal subunit.

One of two assembly initiator proteins, it binds directly to the 5'-end of the 23S rRNA, where it nucleates assembly of the 50S subunit. In terms of biological role, one of the proteins that surrounds the polypeptide exit tunnel on the outside of the subunit. The chain is Large ribosomal subunit protein uL24 from Enterococcus faecalis (strain ATCC 700802 / V583).